Consider the following 373-residue polypeptide: tRNA (guanine(26)-N(2))-dimethyltransferase (373 aa).

A Trm1 methyltransferase domain is found at 2–365 (KIISEGETKL…AELSDLVVLI (364 aa)). The S-adenosyl-L-methionine site is built by Arg35, Arg66, Asp86, Asp113, and Ala114.

This sequence belongs to the class I-like SAM-binding methyltransferase superfamily. Trm1 family.

It catalyses the reaction guanosine(26) in tRNA + 2 S-adenosyl-L-methionine = N(2)-dimethylguanosine(26) in tRNA + 2 S-adenosyl-L-homocysteine + 2 H(+). Its function is as follows. Dimethylates a single guanine residue at position 26 of a number of tRNAs using S-adenosyl-L-methionine as donor of the methyl groups. In Methanococcus maripaludis (strain C6 / ATCC BAA-1332), this protein is tRNA (guanine(26)-N(2))-dimethyltransferase.